Consider the following 808-residue polypeptide: Dynamin-like protein B (808 aa).

One can recognise a Dynamin-type G domain in the interval 43–340 (FIETPEFVFI…TWRKYLDSVP (298 aa)). Residues 53-60 (GKDGNGKS) are G1 motif. 53 to 60 (GKDGNGKS) lines the GTP pocket. A G2 motif region spans residues 79-80 (LR). Residues 150-153 (EPPS) are G3 motif. GTP is bound by residues 150–154 (EPPSV) and 239–242 (NKFH). The segment at 239–242 (NKFH) is G4 motif. The interval 276 to 279 (PSTA) is G5 motif. 2 disordered regions span residues 536-565 (SSFR…SSSI) and 665-695 (SLNN…NSNH). 2 stretches are compositionally biased toward low complexity: residues 552 to 565 (SSPS…SSSI) and 665 to 694 (SLNN…NNSN).

It belongs to the TRAFAC class dynamin-like GTPase superfamily. Dynamin/Fzo/YdjA family.

The protein resides in the cytoplasm. It carries out the reaction GTP + H2O = GDP + phosphate + H(+). In terms of biological role, involved in cytokinesis. May hydrolyze GTP. The polypeptide is Dynamin-like protein B (dlpB) (Dictyostelium discoideum (Social amoeba)).